We begin with the raw amino-acid sequence, 153 residues long: Endoribonuclease YbeY (153 aa).

Residues H116, H120, and H126 each coordinate Zn(2+).

The protein belongs to the endoribonuclease YbeY family. It depends on Zn(2+) as a cofactor.

The protein resides in the cytoplasm. Single strand-specific metallo-endoribonuclease involved in late-stage 70S ribosome quality control and in maturation of the 3' terminus of the 16S rRNA. The sequence is that of Endoribonuclease YbeY from Paraburkholderia phytofirmans (strain DSM 17436 / LMG 22146 / PsJN) (Burkholderia phytofirmans).